Here is a 156-residue protein sequence, read N- to C-terminus: Small ribosomal subunit protein uS7 (156 aa).

Belongs to the universal ribosomal protein uS7 family. Part of the 30S ribosomal subunit. Contacts proteins S9 and S11.

One of the primary rRNA binding proteins, it binds directly to 16S rRNA where it nucleates assembly of the head domain of the 30S subunit. Is located at the subunit interface close to the decoding center, probably blocks exit of the E-site tRNA. The polypeptide is Small ribosomal subunit protein uS7 (Hyphomonas neptunium (strain ATCC 15444)).